Here is a 329-residue protein sequence, read N- to C-terminus: DNA-directed RNA polymerase subunit alpha (329 aa).

The tract at residues 1–235 is alpha N-terminal domain (alpha-NTD); sequence MQGSVTEFLK…EQLEAFVDLR (235 aa). The interval 249 to 329 is alpha C-terminal domain (alpha-CTD); the sequence is FDPILLRPVD…NWPPASIADE (81 aa).

This sequence belongs to the RNA polymerase alpha chain family. As to quaternary structure, homodimer. The RNAP catalytic core consists of 2 alpha, 1 beta, 1 beta' and 1 omega subunit. When a sigma factor is associated with the core the holoenzyme is formed, which can initiate transcription.

The enzyme catalyses RNA(n) + a ribonucleoside 5'-triphosphate = RNA(n+1) + diphosphate. Functionally, DNA-dependent RNA polymerase catalyzes the transcription of DNA into RNA using the four ribonucleoside triphosphates as substrates. In Photorhabdus laumondii subsp. laumondii (strain DSM 15139 / CIP 105565 / TT01) (Photorhabdus luminescens subsp. laumondii), this protein is DNA-directed RNA polymerase subunit alpha.